The sequence spans 387 residues: Queuine tRNA-ribosyltransferase (387 aa).

The active-site Proton acceptor is D93. Substrate is bound by residues 93 to 97 (DSGGF), D147, Q190, and G217. The RNA binding stretch occupies residues 248–254 (GVGTPDD). D267 (nucleophile) is an active-site residue. Residues 272–276 (TRAGR) form an RNA binding; important for wobble base 34 recognition region. Residues C305, C307, C310, and H336 each coordinate Zn(2+).

The protein belongs to the queuine tRNA-ribosyltransferase family. In terms of assembly, homodimer. Within each dimer, one monomer is responsible for RNA recognition and catalysis, while the other monomer binds to the replacement base PreQ1. The cofactor is Zn(2+).

It catalyses the reaction 7-aminomethyl-7-carbaguanine + guanosine(34) in tRNA = 7-aminomethyl-7-carbaguanosine(34) in tRNA + guanine. It participates in tRNA modification; tRNA-queuosine biosynthesis. In terms of biological role, catalyzes the base-exchange of a guanine (G) residue with the queuine precursor 7-aminomethyl-7-deazaguanine (PreQ1) at position 34 (anticodon wobble position) in tRNAs with GU(N) anticodons (tRNA-Asp, -Asn, -His and -Tyr). Catalysis occurs through a double-displacement mechanism. The nucleophile active site attacks the C1' of nucleotide 34 to detach the guanine base from the RNA, forming a covalent enzyme-RNA intermediate. The proton acceptor active site deprotonates the incoming PreQ1, allowing a nucleophilic attack on the C1' of the ribose to form the product. After dissociation, two additional enzymatic reactions on the tRNA convert PreQ1 to queuine (Q), resulting in the hypermodified nucleoside queuosine (7-(((4,5-cis-dihydroxy-2-cyclopenten-1-yl)amino)methyl)-7-deazaguanosine). This is Queuine tRNA-ribosyltransferase from Gluconacetobacter diazotrophicus (strain ATCC 49037 / DSM 5601 / CCUG 37298 / CIP 103539 / LMG 7603 / PAl5).